A 447-amino-acid chain; its full sequence is tRNA-2-methylthio-N(6)-dimethylallyladenosine synthase (447 aa).

Positions 3–120 (KKLYIKTNGC…LPALLNERLE (118 aa)) constitute an MTTase N-terminal domain. The [4Fe-4S] cluster site is built by cysteine 12, cysteine 49, cysteine 83, cysteine 157, cysteine 161, and cysteine 164. In terms of domain architecture, Radical SAM core spans 143–375 (RAEGPTAFVS…QNRLLMNAAR (233 aa)). One can recognise a TRAM domain in the interval 378-441 (ESMIGSKQKI…PNSLRGRLLE (64 aa)).

Belongs to the methylthiotransferase family. MiaB subfamily. In terms of assembly, monomer. [4Fe-4S] cluster serves as cofactor.

The protein resides in the cytoplasm. The catalysed reaction is N(6)-dimethylallyladenosine(37) in tRNA + (sulfur carrier)-SH + AH2 + 2 S-adenosyl-L-methionine = 2-methylsulfanyl-N(6)-dimethylallyladenosine(37) in tRNA + (sulfur carrier)-H + 5'-deoxyadenosine + L-methionine + A + S-adenosyl-L-homocysteine + 2 H(+). In terms of biological role, catalyzes the methylthiolation of N6-(dimethylallyl)adenosine (i(6)A), leading to the formation of 2-methylthio-N6-(dimethylallyl)adenosine (ms(2)i(6)A) at position 37 in tRNAs that read codons beginning with uridine. In Legionella pneumophila (strain Paris), this protein is tRNA-2-methylthio-N(6)-dimethylallyladenosine synthase.